A 348-amino-acid chain; its full sequence is Caricain (348 aa).

A signal peptide spans 1–16 (MAMIPSISKLLFVAIC). Positions 17–132 (LFVHMSVSFG…EEFINEDTVN (116 aa)) are cleaved as a propeptide — activation peptide. An N-linked (GlcNAc...) asparagine glycan is attached at N86. Intrachain disulfides connect C154–C195, C188–C227, and C285–C336. Residue C157 is part of the active site. E64 is bound at residue C157. Catalysis depends on residues H291 and N311.

Belongs to the peptidase C1 family. In terms of assembly, monomer.

It carries out the reaction Hydrolysis of proteins with broad specificity for peptide bonds, similar to those of papain and chymopapain.. With respect to regulation, repressed by the active-site-directed cysteine protease inhibitor E64 (L-trans-epoxysuccinyl-leucylamide-(4-guanido)-butane) produced by Aspergillus japonicus. Its function is as follows. Cysteine proteinase with a high level of diversity in substrate specificity. The chain is Caricain from Carica papaya (Papaya).